The following is a 737-amino-acid chain: DNA polymerase iota (737 aa).

The 215-residue stretch at 17-231 folds into the UmuC domain; sequence IIHLDMDYFY…GDLKRVTGIG (215 aa). Asp-21 is a Mg(2+) binding site. 2 residues coordinate a 2'-deoxyribonucleoside 5'-triphosphate: Tyr-26 and Arg-58. Asp-113 contacts Mg(2+). Glu-114 is a catalytic residue. DNA-binding stretches follow at residues 212–277 and 288–413; these read TYAE…FGRD and KTIG…SKFQ. Disordered regions lie at residues 443 to 464, 482 to 515, 557 to 581, and 607 to 643; these read TSLT…RSSP, SPVP…SPKK, DSEK…RFRT, and LSSN…PSPT. Residues 491–502 are compositionally biased toward polar residues; it reads GSESAATNSDFS. Low complexity-rich tracts occupy residues 563–577, 607–618, and 632–643; these read PMST…APAP, LSSNASSTASSP, and PSTTTLPFPSPT. A Ubiquitin-binding (UBM) motif is present at residues 669 to 686; the sequence is VDAEVFKELPVELQTELI.

It belongs to the DNA polymerase type-Y family. It depends on Mg(2+) as a cofactor. Mn(2+) is required as a cofactor.

The protein localises to the nucleus. The enzyme catalyses DNA(n) + a 2'-deoxyribonucleoside 5'-triphosphate = DNA(n+1) + diphosphate. Functionally, error-prone DNA polymerase specifically involved in DNA repair. Plays an important role in translesion synthesis, where the normal high-fidelity DNA polymerases cannot proceed and DNA synthesis stalls. Favors Hoogsteen base-pairing in the active site. Inserts the correct base with higher fidelity opposite an adenosine template. Exhibits low fidelity and efficiency opposite a thymidine template, where it will preferentially insert guanosine. Forms a Schiff base with 5'-deoxyribose phosphate at abasic sites, but may not have lyase activity. The protein is DNA polymerase iota of Drosophila melanogaster (Fruit fly).